The sequence spans 759 residues: Arylphorin subunit C223 (759 aa).

Positions 1–15 are cleaved as a signal peptide; the sequence is MKIAIVLLAIVGLAA.

The protein belongs to the hemocyanin family. In terms of assembly, heterohexamer. As to expression, fat body.

The protein localises to the secreted. Its subcellular location is the extracellular space. Its function is as follows. Arylphorin is a larval storage protein (LSP) which may serve as a storage protein used primarily as a source of aromatic amino acids for protein synthesis during metamorphosis. It is a constituent of the sclerotizing system of the cuticle, and serves as a carrier for ecdysteroid hormone. In Calliphora vicina (Blue blowfly), this protein is Arylphorin subunit C223.